The chain runs to 79 residues: Small ribosomal subunit protein bS21 (79 aa).

A disordered region spans residues 59-79; sequence RKKMQREGLLPMKPKPVVGVR.

This sequence belongs to the bacterial ribosomal protein bS21 family.

This Methylocella silvestris (strain DSM 15510 / CIP 108128 / LMG 27833 / NCIMB 13906 / BL2) protein is Small ribosomal subunit protein bS21.